The primary structure comprises 226 residues: Respiratory nitrate reductase 2 gamma chain (226 aa).

Residues 1–4 are Periplasmic-facing; the sequence is MIQY. A helical membrane pass occupies residues 5–30; the sequence is LNVFFYDIYPYICATVFFLGSWLRYD. Residues 31–48 are Cytoplasmic-facing; the sequence is YGQYTWRASSSQMLDKRG. A helical transmembrane segment spans residues 49–71; the sequence is MVIWSNLFHIGILGIFFGHLFGM. The heme b site is built by H57 and H67. The Periplasmic portion of the chain corresponds to 72–83; it reads LTPHWMYAWFLP. The chain crosses the membrane as a helical span at residues 84 to 113; it reads VAAKQLMAMVLGGICGVLTLIGGAGLLWRR. Residues 114–125 are Cytoplasmic-facing; sequence LTNQRVRATSTT. A helical membrane pass occupies residues 126–149; that stretch reads PDIIIMSILLIQCLLGLSTIPFSA. Over 150-183 the chain is Periplasmic; sequence QYPDGSEMMKLVGWAQSIVTFRGGSSEMLNGVAF. A helical membrane pass occupies residues 184 to 199; that stretch reads VFRLHLVLGMTIFLLF. 2 residues coordinate heme b: H188 and H206. Residues 200-226 lie on the Cytoplasmic side of the membrane; the sequence is PFTRLVHVWSAPFEYFTRRYQIVRSRR.

Dimer of heterotrimers each composed of an alpha, a beta and a gamma chain. Alpha and beta are catalytic chains; gamma chains are involved in binding the enzyme complex to the cytoplasmic membrane. Requires heme as cofactor.

The protein resides in the cell inner membrane. The catalysed reaction is nitrate + a quinol = a quinone + nitrite + H2O. In terms of biological role, this is a second nitrate reductase enzyme which can substitute for the NRA enzyme and allows E.coli to use nitrate as an electron acceptor during anaerobic growth. The gamma chain is a membrane-embedded heme-iron unit resembling cytochrome b, which transfers electrons from quinones to the beta subunit. The protein is Respiratory nitrate reductase 2 gamma chain (narV) of Escherichia coli (strain K12).